The primary structure comprises 26 residues: DEAD-box ATP-dependent RNA helicase 1 (26 aa).

The short motif at 1–10 (RELLMGIFEK) is the Q motif element. 11–16 (NGTGKT) provides a ligand contact to ATP. Residues 11-26 (NGTGKTAAFVIPLLQK) enclose the Helicase ATP-binding domain.

This sequence belongs to the DEAD box helicase family. DDX6/DHH1 subfamily.

It is found in the cytoplasm. The protein resides in the P-body. The catalysed reaction is ATP + H2O = ADP + phosphate + H(+). Functionally, ATP-dependent RNA helicase involved in mRNA turnover, and more specifically in mRNA decapping. In Catharanthus roseus (Madagascar periwinkle), this protein is DEAD-box ATP-dependent RNA helicase 1.